A 167-amino-acid polypeptide reads, in one-letter code: MKTNCEFPLLCLLIVLVANVEGEVEDTGLKMVKRLWRNWEDPEQRQLLDQGTELEKQREKRLWRNWEDLELRQLLNEFAENQREKRLWRNWERRQVANEDDGEKAKELWRNWEDLKRRQVADLNDEQETQRDKRLWRNWEDNHATLRKRSADSLSRQKRLGKERGKE.

An N-terminal signal peptide occupies residues 1–22 (MKTNCEFPLLCLLIVLVANVEG). Positions 23-94 (EVEDTGLKMV…KRLWRNWERR (72 aa)) are excised as a propeptide. RLWRNWE repeat units follow at residues 34–40 (RLWRNWE), 61–67 (RLWRNWE), and 86–92 (RLWRNWE). Residue glutamine 95 is modified to Pyrrolidone carboxylic acid. The stretch at 107–113 (ELWRNWE) is one RLWRNWE 4; approximate repeat. The propeptide occupies 112–118 (WEDLKRR). Glutamine 119 is subject to Pyrrolidone carboxylic acid. One copy of the RLWRNWE 5 repeat lies at 134–140 (RLWRNWE). The propeptide occupies 139-167 (WEDNHATLRKRSADSLSRQKRLGKERGKE). Residues 147–167 (RKRSADSLSRQKRLGKERGKE) form a disordered region.

This sequence belongs to the scoloptoxin-08 family. Expressed by the venom gland.

It localises to the secreted. The protein is U-scoloptoxin(08)-Er5a of Ethmostigmus rubripes (Giant centipede).